Consider the following 639-residue polypeptide: Chaperone protein HtpG (639 aa).

Residues 1-347 are a; substrate-binding; sequence MSQQETHGFQ…SNDLPLNVSR (347 aa). Residues 348 to 564 are b; it reads EILQDNKVTT…EGEMSTQMIK (217 aa). Positions 565 to 639 are c; sequence LMQAAGQDVP…MNQMLLASVK (75 aa).

The protein belongs to the heat shock protein 90 family. As to quaternary structure, homodimer.

The protein localises to the cytoplasm. Functionally, molecular chaperone. Has ATPase activity. The polypeptide is Chaperone protein HtpG (Shewanella halifaxensis (strain HAW-EB4)).